The chain runs to 118 residues: Small ribosomal subunit protein uS13 (118 aa).

The interval 94–118 (GLPVRGQRTKTNARTRKGPRKPIKK) is disordered.

Belongs to the universal ribosomal protein uS13 family. As to quaternary structure, part of the 30S ribosomal subunit. Forms a loose heterodimer with protein S19. Forms two bridges to the 50S subunit in the 70S ribosome.

Located at the top of the head of the 30S subunit, it contacts several helices of the 16S rRNA. In the 70S ribosome it contacts the 23S rRNA (bridge B1a) and protein L5 of the 50S subunit (bridge B1b), connecting the 2 subunits; these bridges are implicated in subunit movement. Contacts the tRNAs in the A and P-sites. The chain is Small ribosomal subunit protein uS13 from Edwardsiella ictaluri (strain 93-146).